A 250-amino-acid polypeptide reads, in one-letter code: UPF0246 protein cce_3295 (250 aa).

Belongs to the UPF0246 family.

The protein is UPF0246 protein cce_3295 of Crocosphaera subtropica (strain ATCC 51142 / BH68) (Cyanothece sp. (strain ATCC 51142)).